Reading from the N-terminus, the 248-residue chain is tRNA (guanine-N(7)-)-methyltransferase (248 aa).

S-adenosyl-L-methionine-binding positions include glycine 70, 93–94, 129–130, and leucine 149; these read EI and NA. Aspartate 152 is an active-site residue. S-adenosyl-L-methionine is bound at residue 227–229; that stretch reads SEE.

Belongs to the class I-like SAM-binding methyltransferase superfamily. TrmB family.

It localises to the nucleus. The enzyme catalyses guanosine(46) in tRNA + S-adenosyl-L-methionine = N(7)-methylguanosine(46) in tRNA + S-adenosyl-L-homocysteine. The protein operates within tRNA modification; N(7)-methylguanine-tRNA biosynthesis. In terms of biological role, catalyzes the formation of N(7)-methylguanine at position 46 (m7G46) in tRNA. The protein is tRNA (guanine-N(7)-)-methyltransferase of Drosophila mojavensis (Fruit fly).